Reading from the N-terminus, the 383-residue chain is 8-amino-7-oxononanoate synthase (383 aa).

Arginine 22 lines the substrate pocket. Residue 109 to 110 (GF) coordinates pyridoxal 5'-phosphate. Histidine 134 provides a ligand contact to substrate. Positions 178, 206, and 232 each coordinate pyridoxal 5'-phosphate. Position 235 is an N6-(pyridoxal phosphate)lysine (lysine 235). Threonine 348 lines the substrate pocket.

The protein belongs to the class-II pyridoxal-phosphate-dependent aminotransferase family. BioF subfamily. As to quaternary structure, homodimer. Pyridoxal 5'-phosphate serves as cofactor.

It catalyses the reaction 6-carboxyhexanoyl-[ACP] + L-alanine + H(+) = (8S)-8-amino-7-oxononanoate + holo-[ACP] + CO2. It participates in cofactor biosynthesis; biotin biosynthesis. Catalyzes the decarboxylative condensation of pimeloyl-[acyl-carrier protein] and L-alanine to produce 8-amino-7-oxononanoate (AON), [acyl-carrier protein], and carbon dioxide. The chain is 8-amino-7-oxononanoate synthase from Vibrio parahaemolyticus serotype O3:K6 (strain RIMD 2210633).